The chain runs to 362 residues: Flagellar P-ring protein (362 aa).

An N-terminal signal peptide occupies residues M1–A15.

The protein belongs to the FlgI family. In terms of assembly, the basal body constitutes a major portion of the flagellar organelle and consists of four rings (L,P,S, and M) mounted on a central rod.

It is found in the periplasm. Its subcellular location is the bacterial flagellum basal body. Assembles around the rod to form the L-ring and probably protects the motor/basal body from shearing forces during rotation. This chain is Flagellar P-ring protein, found in Pseudomonas fluorescens (strain Pf0-1).